A 266-amino-acid chain; its full sequence is Glucosamine-6-phosphate deaminase (266 aa).

Asp72 functions as the Proton acceptor; for enolization step in the catalytic mechanism. Asp141 acts as the For ring-opening step in catalysis. His143 functions as the Proton acceptor; for ring-opening step in the catalytic mechanism. The For ring-opening step role is filled by Glu148.

It belongs to the glucosamine/galactosamine-6-phosphate isomerase family. NagB subfamily. Homohexamer; trimer of disulfide-linked dimers.

The catalysed reaction is alpha-D-glucosamine 6-phosphate + H2O = beta-D-fructose 6-phosphate + NH4(+). The protein operates within amino-sugar metabolism; N-acetylneuraminate degradation; D-fructose 6-phosphate from N-acetylneuraminate: step 5/5. Its activity is regulated as follows. Allosterically activated by N-acetylglucosamine 6-phosphate (GlcNAc6P). In terms of biological role, catalyzes the reversible isomerization-deamination of glucosamine 6-phosphate (GlcN6P) to form fructose 6-phosphate (Fru6P) and ammonium ion. This Vibrio parahaemolyticus serotype O3:K6 (strain RIMD 2210633) protein is Glucosamine-6-phosphate deaminase.